Consider the following 177-residue polypeptide: Inner membrane-spanning protein YciB (177 aa).

5 helical membrane passes run 22–42, 50–70, 76–96, 121–141, and 149–169; these read IFIA…IHWI, ISLF…FFHN, WKIT…QFFT, FIWS…AYYF, and FKVF…SIYI.

This sequence belongs to the YciB family.

The protein localises to the cell inner membrane. Its function is as follows. Plays a role in cell envelope biogenesis, maintenance of cell envelope integrity and membrane homeostasis. The polypeptide is Inner membrane-spanning protein YciB (Buchnera aphidicola subsp. Acyrthosiphon pisum (strain 5A)).